We begin with the raw amino-acid sequence, 119 residues long: Large ribosomal subunit protein bL20 (119 aa).

It belongs to the bacterial ribosomal protein bL20 family.

In terms of biological role, binds directly to 23S ribosomal RNA and is necessary for the in vitro assembly process of the 50S ribosomal subunit. It is not involved in the protein synthesizing functions of that subunit. This chain is Large ribosomal subunit protein bL20, found in Shewanella sediminis (strain HAW-EB3).